Reading from the N-terminus, the 110-residue chain is MWRSSNQRGVSRRRDKSMRKYTRHGNADRRQRAIASMASVRKKKPRSKNTYTGNISSLPPRPNHRNIHLRNPLSPRFYHGRVHTQTHRHAQPTHVVVAGGYVDGAYRGET.

The segment at 1–72 (MWRSSNQRGV…NHRNIHLRNP (72 aa)) is disordered. Residues 10–23 (VSRRRDKSMRKYTR) show a composition bias toward basic residues. Positions 48–57 (KNTYTGNISS) are enriched in polar residues.

This is an uncharacterized protein from Human herpesvirus 6A (strain Uganda-1102) (HHV-6 variant A).